The following is a 486-amino-acid chain: Glutamyl-tRNA(Gln) amidotransferase subunit A (486 aa).

Active-site charge relay system residues include K78 and S153. S177 serves as the catalytic Acyl-ester intermediate.

It belongs to the amidase family. GatA subfamily. As to quaternary structure, heterotrimer of A, B and C subunits.

The catalysed reaction is L-glutamyl-tRNA(Gln) + L-glutamine + ATP + H2O = L-glutaminyl-tRNA(Gln) + L-glutamate + ADP + phosphate + H(+). Functionally, allows the formation of correctly charged Gln-tRNA(Gln) through the transamidation of misacylated Glu-tRNA(Gln) in organisms which lack glutaminyl-tRNA synthetase. The reaction takes place in the presence of glutamine and ATP through an activated gamma-phospho-Glu-tRNA(Gln). The sequence is that of Glutamyl-tRNA(Gln) amidotransferase subunit A from Syntrophobacter fumaroxidans (strain DSM 10017 / MPOB).